Here is a 175-residue protein sequence, read N- to C-terminus: Nucleoside triphosphate/diphosphate phosphatase (175 aa).

The active-site Proton donor is Arg-23. Asn-87, Asp-103, Asp-105, Asp-107, Asp-120, and Glu-123 together coordinate Mg(2+).

Belongs to the Ntdp family. The cofactor is Mg(2+).

It catalyses the reaction a ribonucleoside 5'-triphosphate + H2O = a ribonucleoside 5'-diphosphate + phosphate + H(+). The catalysed reaction is a ribonucleoside 5'-diphosphate + H2O = a ribonucleoside 5'-phosphate + phosphate + H(+). Functionally, has nucleoside phosphatase activity towards nucleoside triphosphates and nucleoside diphosphates. This is Nucleoside triphosphate/diphosphate phosphatase from Shouchella clausii (strain KSM-K16) (Alkalihalobacillus clausii).